The chain runs to 214 residues: Threonylcarbamoyl-AMP synthase (214 aa).

Positions 9-214 constitute a YrdC-like domain; the sequence is TDSVIQAAHW…GDALTGQIIR (206 aa).

Belongs to the SUA5 family. TsaC subfamily.

The protein localises to the cytoplasm. The enzyme catalyses L-threonine + hydrogencarbonate + ATP = L-threonylcarbamoyladenylate + diphosphate + H2O. Functionally, required for the formation of a threonylcarbamoyl group on adenosine at position 37 (t(6)A37) in tRNAs that read codons beginning with adenine. Catalyzes the conversion of L-threonine, HCO(3)(-)/CO(2) and ATP to give threonylcarbamoyl-AMP (TC-AMP) as the acyladenylate intermediate, with the release of diphosphate. In Psychrobacter arcticus (strain DSM 17307 / VKM B-2377 / 273-4), this protein is Threonylcarbamoyl-AMP synthase.